A 187-amino-acid chain; its full sequence is uncharacterized protein (187 aa).

The segment at 1–95 (MTTMKRSADP…GSTRPSARYG (95 aa)) is disordered. The span at 46 to 80 (RARRSRGPKRFLGKRNYRRARARKPGKRDRAHSSK) shows a compositional bias: basic residues.

The protein resides in the mitochondrion. This is an uncharacterized protein from Arabidopsis thaliana (Mouse-ear cress).